The chain runs to 41 residues: Large ribosomal subunit protein bL36 (41 aa).

This sequence belongs to the bacterial ribosomal protein bL36 family.

The polypeptide is Large ribosomal subunit protein bL36 (Hydrogenovibrio crunogenus (strain DSM 25203 / XCL-2) (Thiomicrospira crunogena)).